The primary structure comprises 1237 residues: Tyrosine-protein kinase sid-3 (1237 aa).

Residues 107-369 enclose the Protein kinase domain; the sequence is IKLYELIGEG…REDLVAAMFL (263 aa). ATP-binding positions include 113 to 121 and Lys-139; that span reads IGEGSFAVV. Residue Asp-230 is the Proton acceptor of the active site. The SH3 domain occupies 366 to 426; the sequence is AMFLDAVARE…PRSVVFAQTN (61 aa). 6 disordered regions span residues 683–704, 741–802, 826–919, 940–986, 999–1018, and 1134–1156; these read NQGS…GIQN, PPAP…APVQ, IQPQ…EERR, SNST…SEPI, SATT…PSPP, and QQRQ…SAAS. Polar residues-rich tracts occupy residues 749–766, 778–791, and 847–863; these read QPVS…TLQK, KRPT…SNGF, and SAPT…SQAS. Composition is skewed to low complexity over residues 881–910 and 940–961; these read TPIT…TSTT and SNST…PSTA. Residues 1138–1156 show a composition bias toward low complexity; the sequence is AGSSSRAVPPASASTSAAS.

It belongs to the protein kinase superfamily. Tyr protein kinase family. SYK/ZAP-70 subfamily. In terms of tissue distribution, ubiquitously present in all tissues tested. Expressed in the somatic cells of gut, pharynx, body wall muscle, neurons, skin and excretory canal cells.

Its subcellular location is the cytoplasm. It catalyses the reaction L-tyrosyl-[protein] + ATP = O-phospho-L-tyrosyl-[protein] + ADP + H(+). Its function is as follows. Tyrosine-protein kinase which plays a role in RNA-mediated gene silencing by mediating import of double-stranded RNA (dsRNA) into cells. Not required for import of ingested dsRNA into intestinal cells but involved in subsequent export from intestinal cells to internal tissues. The protein is Tyrosine-protein kinase sid-3 (sid-3) of Caenorhabditis elegans.